A 351-amino-acid chain; its full sequence is Basic salivary proline-rich protein 3 (351 aa).

The N-terminal stretch at 1-16 is a signal peptide; sequence MLLILLSVALLALSSA. A Pyrrolidone carboxylic acid modification is found at Gln-17. A disordered region spans residues 17–351; the sequence is QSLNEDVSQE…HRPPQGQPPQ (335 aa). The segment covering 20-31 has biased composition (polar residues); that stretch reads NEDVSQEESPSV. Ser-24 bears the Phosphoserine mark. 12 tandem repeats follow at residues 53–73, 74–94, 95–115, 116–136, 137–157, 158–178, 179–199, 200–220, 221–241, 242–261, 263–283, and 284–304. Positions 53–304 are 12 X 21 AA tandem repeats of [RHP]-P-G-K-P-[EQ]-G-[PQS]-P-[PS]-Q-[GE]-G-N-[QK]-[SP]-[QR]-[GR]-P-P-P; sequence PPGKPEGRPP…EGNKPQRPPP (252 aa). A glycan (N-linked (GlcNAc...) asparagine) is linked at Asn-66. Positions 70–84 are enriched in pro residues; the sequence is GPPPRPGKPEGPPPQ. Asn-87 carries N-linked (GlcNAc...) asparagine glycosylation. Ser-89 carries O-linked (Hex) serine glycosylation. Over residues 99 to 111 the composition is skewed to low complexity; the sequence is PEGQPPQGGNQSQ. Residue Asn-108 is glycosylated (N-linked (GlcNAc...) asparagine). Over residues 112–126 the composition is skewed to pro residues; that stretch reads GPPPRPGKPEGPPPQ. Asn-129 carries an N-linked (GlcNAc...) asparagine glycan. The segment covering 133-147 has biased composition (pro residues); that stretch reads GPPPRPGKPEGPPPQ. An N-linked (GlcNAc...) asparagine glycan is attached at Asn-150. 2 stretches are compositionally biased toward pro residues: residues 154-168 and 175-189; these read GPPP…PPPQ. A glycan (N-linked (GlcNAc...) asparagine) is linked at Asn-192. Positions 196-210 are enriched in pro residues; sequence GPPPRPGKPEGPPPQ. Asn-213 and Asn-234 each carry an N-linked (GlcNAc...) asparagine glycan. 3 stretches are compositionally biased toward pro residues: residues 217 to 252, 259 to 270, and 279 to 351; these read GPPP…PPPQ, GPPPRPGKPEGP, and QGPP…QPPQ. N-linked (Hex) asparagine; atypical glycosylation occurs at Asn-297.

N- and O-glycosylated; contains about 50% carbohydrate. This is composed of highly fucosylated N-linked saccharides, the major structure is a biantennary asialosaccharide containing 2 fucose residues on one antenna and an unsubstituted terminal lactosamine sequence on the other. The Gram-negative bacterium F.nucleatum binds to carbohydrates containing unsubstituted GalBeta1,4GlcNAc residues. N-glycosylation on Asn-87 is prevalent in head and neck cancer patients. Post-translationally, proteolytically cleaved at the tripeptide Xaa-Pro-Gln, where Xaa in the P(3) position is mostly lysine. The endoprotease may be of microbial origin. Besides on the N-terminal of mature PRB3, pyroglutamate formation found on at least Gln-67, Gln-88, Gln-256 and Gln-337.

The protein resides in the secreted. Its function is as follows. Acts as a receptor for the Gram-negative bacterium F.nucleatum. This Homo sapiens (Human) protein is Basic salivary proline-rich protein 3 (PRB3).